Here is a 138-residue protein sequence, read N- to C-terminus: Large ribosomal subunit protein uL16 (138 aa).

Belongs to the universal ribosomal protein uL16 family. As to quaternary structure, part of the 50S ribosomal subunit.

In terms of biological role, binds 23S rRNA and is also seen to make contacts with the A and possibly P site tRNAs. This chain is Large ribosomal subunit protein uL16, found in Rhodospirillum rubrum (strain ATCC 11170 / ATH 1.1.1 / DSM 467 / LMG 4362 / NCIMB 8255 / S1).